Here is a 384-residue protein sequence, read N- to C-terminus: S-adenosylmethionine synthase (384 aa).

Position 15 (H15) interacts with ATP. D17 lines the Mg(2+) pocket. Residue E43 participates in K(+) binding. Positions 56 and 99 each coordinate L-methionine. Residues 99–109 (QSPDINQGVDK) are flexible loop. Residues 164-166 (DAK), 230-231 (RF), D239, 245-246 (RK), A262, and K266 each bind ATP. Residue D239 participates in L-methionine binding. K270 is an L-methionine binding site.

It belongs to the AdoMet synthase family. In terms of assembly, homotetramer; dimer of dimers. It depends on Mg(2+) as a cofactor. K(+) is required as a cofactor.

The protein localises to the cytoplasm. It carries out the reaction L-methionine + ATP + H2O = S-adenosyl-L-methionine + phosphate + diphosphate. It participates in amino-acid biosynthesis; S-adenosyl-L-methionine biosynthesis; S-adenosyl-L-methionine from L-methionine: step 1/1. Functionally, catalyzes the formation of S-adenosylmethionine (AdoMet) from methionine and ATP. The overall synthetic reaction is composed of two sequential steps, AdoMet formation and the subsequent tripolyphosphate hydrolysis which occurs prior to release of AdoMet from the enzyme. This is S-adenosylmethionine synthase from Aliivibrio salmonicida (strain LFI1238) (Vibrio salmonicida (strain LFI1238)).